The following is a 391-amino-acid chain: Pyoverdine export membrane fusion protein PvdR (391 aa).

An N-terminal signal peptide occupies residues 1 to 24; the sequence is MRRTRSTRRALLVAVCLSPLIALA. Residues 108–180 adopt a coiled-coil conformation; that stretch reads IEMLKAQLAE…QASLRSDEAE (73 aa). The interval 263–289 is disordered; that stretch reads LPVPPKPLDQSNQGGGSPTSGSGGQSG. Residues 275 to 289 are compositionally biased toward gly residues; that stretch reads QGGGSPTSGSGGQSG.

The protein belongs to the membrane fusion protein (MFP) (TC 8.A.1) family. In terms of assembly, part of the tripartite efflux system PvdRT-OpmQ, which is composed of an inner membrane component with both ATPase and permease domains, PvdT, a periplasmic membrane fusion protein, PvdR, and an outer membrane component, OpmQ.

Its subcellular location is the periplasm. Part of the tripartite efflux system PvdRT-OpmQ required for the secretion into the extracellular milieu of the siderophore pyoverdine (PVD), which is involved in iron acquisition. This subunit is an adapter protein that stimulates the ATPase activity of PvdT and connects the inner and outer membrane components. The system is responsible for export of newly synthesized PVD after the final steps of biosynthesis have taken place in the periplasm. It is also responsible for recycling of PVD after internalization of ferri-PVD into the periplasm by the outer-membrane receptor FpvA and release of iron from PVD, thus making PVD available for new cycles of iron uptake. In addition, can expel unwanted metals complexed with PVD from the periplasm into the extracellular medium. Does not contribute to resistance to antibiotics belonging to the classes of tetracyclines, aminoglycosides, beta-lactams and macrolides, and chloramphenicol. The chain is Pyoverdine export membrane fusion protein PvdR from Pseudomonas aeruginosa (strain ATCC 15692 / DSM 22644 / CIP 104116 / JCM 14847 / LMG 12228 / 1C / PRS 101 / PAO1).